A 391-amino-acid polypeptide reads, in one-letter code: Putative protein PLEKHA9 (391 aa).

This Homo sapiens (Human) protein is Putative protein PLEKHA9 (PLEKHA8P1).